Consider the following 309-residue polypeptide: Homoserine O-succinyltransferase (309 aa).

Cysteine 142 acts as the Acyl-thioester intermediate in catalysis. Substrate is bound by residues lysine 163 and serine 192. Catalysis depends on histidine 235, which acts as the Proton acceptor. The active site involves glutamate 237. Arginine 249 is a binding site for substrate.

The protein belongs to the MetA family. As to quaternary structure, homodimer.

The protein localises to the cytoplasm. It catalyses the reaction L-homoserine + succinyl-CoA = O-succinyl-L-homoserine + CoA. It participates in amino-acid biosynthesis; L-methionine biosynthesis via de novo pathway; O-succinyl-L-homoserine from L-homoserine: step 1/1. Its function is as follows. Transfers a succinyl group from succinyl-CoA to L-homoserine, forming succinyl-L-homoserine. The polypeptide is Homoserine O-succinyltransferase (Escherichia coli (strain ATCC 8739 / DSM 1576 / NBRC 3972 / NCIMB 8545 / WDCM 00012 / Crooks)).